Here is a 241-residue protein sequence, read N- to C-terminus: MGQKVNPIGLRLGINRNWESRWFPNFKTAAAYLGEDHKIRTYLKKELYYAGVSNIVIERTAKRLRVTIIAARPGIIIGKKGSDIEKLKDTLQALVGKPLSVNIKEEKKAQISSQLVAENVATQLERRVAFRRAMKKVMQNAQRGGAKGIKVSVSGRLGGAEMARTEWYLEGRVPLHTLRAKIDYGFAEAHTTYGCIGVKVWIFKGEVLTKGIPAEVKEEQQKEGARRPKRAPKRENSGKAE.

Positions 39 to 107 (IRTYLKKELY…PLSVNIKEEK (69 aa)) constitute a KH type-2 domain. The tract at residues 214–241 (AEVKEEQQKEGARRPKRAPKRENSGKAE) is disordered. Residues 215–226 (EVKEEQQKEGAR) are compositionally biased toward basic and acidic residues.

The protein belongs to the universal ribosomal protein uS3 family. Part of the 30S ribosomal subunit. Forms a tight complex with proteins S10 and S14.

In terms of biological role, binds the lower part of the 30S subunit head. Binds mRNA in the 70S ribosome, positioning it for translation. The sequence is that of Small ribosomal subunit protein uS3 from Sulfurimonas denitrificans (strain ATCC 33889 / DSM 1251) (Thiomicrospira denitrificans (strain ATCC 33889 / DSM 1251)).